The primary structure comprises 258 residues: Transcription cofactor vestigial-like protein 1 (258 aa).

Composition is skewed to polar residues over residues 55 to 65 (PQELTPSSQSE) and 74 to 87 (SMSPNQWRYSSPWT). Positions 55–93 (PQELTPSSQSEGVMLKNDDSMSPNQWRYSSPWTKPQPEV) are disordered.

Belongs to the vestigial family. Interacts with TEFs.

The protein localises to the nucleus. Functionally, may act as a specific coactivator for the mammalian TEFs. The chain is Transcription cofactor vestigial-like protein 1 (VGLL1) from Homo sapiens (Human).